The following is a 120-amino-acid chain: NADH-ubiquinone oxidoreductase chain 3 (120 aa).

3 helical membrane passes run 10–30, 62–82, and 89–109; these read ILILFFISLGLSIILFFLGYF, FYLVAILFLIFDLEITFLFPF, and MTLFSYSIMLIFLIILTIGFI.

This sequence belongs to the complex I subunit 3 family.

It localises to the mitochondrion membrane. It carries out the reaction a ubiquinone + NADH + 5 H(+)(in) = a ubiquinol + NAD(+) + 4 H(+)(out). Functionally, core subunit of the mitochondrial membrane respiratory chain NADH dehydrogenase (Complex I) that is believed to belong to the minimal assembly required for catalysis. Complex I functions in the transfer of electrons from NADH to the respiratory chain. The immediate electron acceptor for the enzyme is believed to be ubiquinone. The polypeptide is NADH-ubiquinone oxidoreductase chain 3 (nad3) (Dictyostelium citrinum (Slime mold)).